Reading from the N-terminus, the 692-residue chain is Elongation factor G (692 aa).

Positions 8–282 constitute a tr-type G domain; the sequence is ERTRNIGIMA…AIVYYLPSPV (275 aa). Residues 17–24, 81–85, and 135–138 each bind GTP; these read AHIDAGKT, DTPGH, and NKMD.

The protein belongs to the TRAFAC class translation factor GTPase superfamily. Classic translation factor GTPase family. EF-G/EF-2 subfamily.

The protein localises to the cytoplasm. Its function is as follows. Catalyzes the GTP-dependent ribosomal translocation step during translation elongation. During this step, the ribosome changes from the pre-translocational (PRE) to the post-translocational (POST) state as the newly formed A-site-bound peptidyl-tRNA and P-site-bound deacylated tRNA move to the P and E sites, respectively. Catalyzes the coordinated movement of the two tRNA molecules, the mRNA and conformational changes in the ribosome. This Carboxydothermus hydrogenoformans (strain ATCC BAA-161 / DSM 6008 / Z-2901) protein is Elongation factor G.